A 351-amino-acid chain; its full sequence is METGGGQGLPVLLLLLLLLRPCEVSGREAACPRPCGGRCPAEPPRCAPGVPAVLDGCGCCLVCARQRGESCSPLLPCDESGGLYCDRGPEDGGGAGICMVLEGDNCVFDGMIYRNGETFQPSCKYQCTCRDGQIGCLPRCNLGLLLPGPDCPFPRKIEVPGECCEKWVCDPRDEVLLGGFAMAAYRQEATLGIDVSDSSANCIEQTTEWSACSKSCGMGFSTRVTNRNQQCEMVKQTRLCMMRPCENEEPSDKKGKKCIQTKKSMKAVRFEYKNCTSVQTYKPRYCGLCNDGRCCTPHNTKTIQVEFRCPQGKFLKKPMMLINTCVCHGNCPQSNNAFFQPLDPMSSEAKI.

An N-terminal signal peptide occupies residues 1–24; the sequence is METGGGQGLPVLLLLLLLLRPCEV. The IGFBP N-terminal domain maps to 27–101; sequence REAACPRPCG…GGGAGICMVL (75 aa). 6 cysteine pairs are disulfide-bonded: Cys-31–Cys-57, Cys-35–Cys-59, Cys-39–Cys-60, Cys-46–Cys-63, Cys-71–Cys-85, and Cys-77–Cys-98. Positions 104 to 170 constitute a VWFC domain; it reads DNCVFDGMIY…GECCEKWVCD (67 aa). A TSP type-1 domain is found at 201 to 246; sequence NCIEQTTEWSACSKSCGMGFSTRVTNRNQQCEMVKQTRLCMMRPCE. 5 disulfides stabilise this stretch: Cys-258-Cys-295, Cys-275-Cys-309, Cys-286-Cys-325, Cys-289-Cys-327, and Cys-294-Cys-331. Residues 258-332 enclose the CTCK domain; the sequence is CIQTKKSMKA…NTCVCHGNCP (75 aa). Residue Asn-274 is glycosylated (N-linked (GlcNAc...) asparagine).

The protein belongs to the CCN family. In terms of tissue distribution, brain and heart, and at a lower level in muscle and intestine, in the embryo. Lung and less so in brain and spleen, in adult chicken.

The protein resides in the secreted. It is found in the cytoplasm. It localises to the cell junction. The protein localises to the gap junction. Immediate-early protein likely to play a role in cell growth regulation. Its overexpression is associated with tumorigenesis and expression of a N-terminal-truncated version of CCN3 gene in chicken embryonic fibroblasts (CEF) is sufficient to induce the transformation of CEF in vitro. The protein is CCN family member 3 (CCN3) of Gallus gallus (Chicken).